Here is a 374-residue protein sequence, read N- to C-terminus: Probable neutral protease 2 homolog TRV_05367 (374 aa).

The signal sequence occupies residues 1–19 (MQVIVALAALGSLAAPALG). Residues 20–189 (FSIPRGVPVS…RGPLTRINKR (170 aa)) constitute a propeptide that is removed on maturation. 2 disulfide bridges follow: C197–C267 and C274–C292. Position 317 (H317) interacts with Zn(2+). Residue E318 is part of the active site. H321 and D332 together coordinate Zn(2+).

This sequence belongs to the peptidase M35 family. Zn(2+) serves as cofactor.

It is found in the secreted. The enzyme catalyses Preferential cleavage of bonds with hydrophobic residues in P1'. Also 3-Asn-|-Gln-4 and 8-Gly-|-Ser-9 bonds in insulin B chain.. Its function is as follows. Probable secreted metalloprotease that shows high activities on basic nuclear substrates such as histone and protamine. May be involved in virulence. The polypeptide is Probable neutral protease 2 homolog TRV_05367 (Trichophyton verrucosum (strain HKI 0517)).